The primary structure comprises 58 residues: uncharacterized protein (58 aa).

A helical transmembrane segment spans residues 12-32 (VMTLLITISILIVLAVLLVTI).

The protein resides in the cell membrane. This is an uncharacterized protein from Bacillus subtilis (strain 168).